The sequence spans 1372 residues: Collagen alpha-2(I) chain (1372 aa).

The signal sequence occupies residues methionine 1 to cysteine 22. Pyrrolidone carboxylic acid is present on glutamine 23. The propeptide at glutamine 23 to alanine 85 is N-terminal propeptide. Residues glycine 28 to arginine 1135 form a disordered region. Residues valine 59–proline 77 are compositionally biased toward pro residues. Glutamine 86 carries the pyrrolidone carboxylic acid modification. The residue at position 90 (lysine 90) is an Allysine. A compositionally biased stretch (low complexity) spans glycine 95 to lysine 146. A compositionally biased stretch (basic and acidic residues) spans alanine 147–glutamate 161. At lysine 183 the chain carries 5-hydroxylysine; alternate. Lysine 183 carries O-linked (Gal...) hydroxylysine; alternate glycosylation. Low complexity-rich tracts occupy residues valine 231–proline 260, alanine 285–proline 299, proline 306–proline 327, proline 336–arginine 348, proline 390–alanine 416, leucine 476–alanine 495, and proline 519–glutamine 537. Over residues glycine 544 to glycine 553 the composition is skewed to gly residues. A compositionally biased stretch (low complexity) spans proline 600–alanine 639. The segment covering glycine 640–glycine 649 has biased composition (gly residues). Composition is skewed to low complexity over residues asparagine 674–serine 716 and proline 725–alanine 743. The span at lysine 744–lysine 753 shows a compositional bias: basic and acidic residues. Positions glutamate 755 to serine 771 are enriched in low complexity. Residues glycine 781–glycine 790 are compositionally biased toward gly residues. The short motif at arginine 783–aspartate 785 is the Cell attachment site element. Positions threonine 792–threonine 801 are enriched in low complexity. The short motif at arginine 828–aspartate 830 is the Cell attachment site element. Low complexity-rich tracts occupy residues serine 855–proline 882, proline 891–proline 927, proline 957–alanine 978, and proline 987–proline 1007. The Cell attachment site signature appears at arginine 1011–aspartate 1013. Positions arginine 1011–alanine 1022 are enriched in basic and acidic residues. Pro residues predominate over residues alanine 1095–proline 1107. Residues glycine 1108–glycine 1120 show a composition bias toward gly residues. Residues aspartate 1126–lysine 1372 constitute a propeptide, C-terminal propeptide. One can recognise a Fibrillar collagen NC1 domain in the interval tyrosine 1139–lysine 1372. 3 cysteine pairs are disulfide-bonded: cysteine 1169–cysteine 1201, cysteine 1209–cysteine 1370, and cysteine 1278–cysteine 1323. 5 residues coordinate Ca(2+): aspartate 1187, asparagine 1189, glutamine 1190, cysteine 1192, and aspartate 1195. N-linked (GlcNAc...) asparagine glycosylation occurs at asparagine 1273.

The protein belongs to the fibrillar collagen family. Trimers of one alpha 2(I) and two alpha 1(I) chains. Interacts (via C-terminus) with TMEM131 (via PapD-L domain); the interaction is direct and is involved in assembly and TRAPPIII ER-to-Golgi transport complex-dependent secretion of collagen. In terms of processing, proline residues at the third position of the tripeptide repeating unit (G-X-P) are hydroxylated in some or all of the chains. Proline residues at the second position of the tripeptide repeating unit (G-P-X) are hydroxylated in some of the chains. Forms the fibrils of tendon, ligaments and bones. In bones the fibrils are mineralized with calcium hydroxyapatite. Expressed in flagella of epididymal sperm.

The protein localises to the secreted. It is found in the extracellular space. It localises to the extracellular matrix. Type I collagen is a member of group I collagen (fibrillar forming collagen). The polypeptide is Collagen alpha-2(I) chain (Col1a2) (Rattus norvegicus (Rat)).